Reading from the N-terminus, the 645-residue chain is DNA mismatch repair protein MutL (645 aa).

The protein belongs to the DNA mismatch repair MutL/HexB family.

This protein is involved in the repair of mismatches in DNA. It is required for dam-dependent methyl-directed DNA mismatch repair. May act as a 'molecular matchmaker', a protein that promotes the formation of a stable complex between two or more DNA-binding proteins in an ATP-dependent manner without itself being part of a final effector complex. The protein is DNA mismatch repair protein MutL of Pediococcus pentosaceus (strain ATCC 25745 / CCUG 21536 / LMG 10740 / 183-1w).